The primary structure comprises 385 residues: Bifunctional chorismate mutase/prephenate dehydratase (385 aa).

Residues 1–92 (MPSKNDLLSF…ESVLTQKKLL (92 aa)) form the Chorismate mutase domain. Positions 11, 28, 39, 48, 52, 84, and 88 each coordinate substrate. In terms of domain architecture, Prephenate dehydratase spans 105 to 285 (SFSFLGPKGS…NITRFILLSR (181 aa)). Positions 286–385 (KPVSISSKIP…PSENITPIIP (100 aa)) are regulatory. In terms of domain architecture, ACT spans 299 to 376 (TLIFNTGQES…KFIKILGCYP (78 aa)).

It is found in the cytoplasm. The enzyme catalyses chorismate = prephenate. It carries out the reaction prephenate + H(+) = 3-phenylpyruvate + CO2 + H2O. It participates in amino-acid biosynthesis; L-phenylalanine biosynthesis; phenylpyruvate from prephenate: step 1/1. The protein operates within metabolic intermediate biosynthesis; prephenate biosynthesis; prephenate from chorismate: step 1/1. Catalyzes the Claisen rearrangement of chorismate to prephenate and the decarboxylation/dehydration of prephenate to phenylpyruvate. The polypeptide is Bifunctional chorismate mutase/prephenate dehydratase (pheA) (Buchnera aphidicola subsp. Schizaphis graminum (strain Sg)).